We begin with the raw amino-acid sequence, 163 residues long: Epithelial membrane protein 3 (163 aa).

The helical transmembrane segment at 4-24 (LLLVVSALHILILVLLFVATL) threads the bilayer. Residues N46 and N56 are each glycosylated (N-linked (GlcNAc...) asparagine). Helical transmembrane passes span 66 to 86 (VQAL…LFMI), 100 to 120 (TGLC…IYAI), and 139 to 159 (FALA…YIHL).

This sequence belongs to the PMP-22/EMP/MP20 family.

The protein localises to the membrane. Functionally, probably involved in cell proliferation and cell-cell interactions. This is Epithelial membrane protein 3 (Emp3) from Rattus norvegicus (Rat).